Here is a 107-residue protein sequence, read N- to C-terminus: Large ribosomal subunit protein uL24 (107 aa).

It belongs to the universal ribosomal protein uL24 family. Part of the 50S ribosomal subunit.

In terms of biological role, one of two assembly initiator proteins, it binds directly to the 5'-end of the 23S rRNA, where it nucleates assembly of the 50S subunit. Its function is as follows. One of the proteins that surrounds the polypeptide exit tunnel on the outside of the subunit. In Fervidobacterium nodosum (strain ATCC 35602 / DSM 5306 / Rt17-B1), this protein is Large ribosomal subunit protein uL24.